Here is a 902-residue protein sequence, read N- to C-terminus: Cysteine-tryptophan domain-containing zinc finger protein 3 (902 aa).

The CW-type zinc-finger motif lies at 21-74 (VLIEDNWVCCDMCHKWRLLPYGTNTSMLPKKWICSMLDWLPGMNKCDISEDETT). Zn(2+) is bound by residues Cys-30, Cys-33, Cys-54, and Cys-66. Disordered regions lie at residues 131–233 (EHDQ…EDRH), 326–345 (EDNR…NENL), 420–480 (QSST…LNAD), and 537–651 (HGPT…SASP). 2 stretches are compositionally biased toward basic and acidic residues: residues 151–169 (KNRE…DPVS) and 193–203 (SHSDGGDLTEK). The span at 204–213 (SKKHSKSKNR) shows a compositional bias: basic residues. 2 stretches are compositionally biased toward basic and acidic residues: residues 214–233 (RGID…EDRH) and 335–345 (HTSKGGDNENL). The span at 421-433 (SSTVATSSSSKVS) shows a compositional bias: low complexity. Composition is skewed to polar residues over residues 450–463 (ESVS…SNTD), 564–588 (NSAP…QIEM), and 599–611 (IDNQ…IGQD). The span at 612-625 (NHSHMKEGKSEVHT) shows a compositional bias: basic and acidic residues. Over residues 634 to 648 (KNHTQLRSNVENGDS) the composition is skewed to polar residues.

In terms of tissue distribution, expressed in leaf sheaths, flag leaves, nodes, internodes and panicles.

The protein resides in the nucleus. Binds to histones H3K4me1, H3K4me2 and H3K4me3 in GST pull-down assay. May facilitate the recruitment of effectors to mediate gene expression. The polypeptide is Cysteine-tryptophan domain-containing zinc finger protein 3 (Oryza sativa subsp. japonica (Rice)).